Here is a 97-residue protein sequence, read N- to C-terminus: C-C motif chemokine 7 (97 aa).

The first 23 residues, 1 to 23 (MRISATLLCLLLIAAAFSIQVWA), serve as a signal peptide directing secretion. Residue Gln-24 is modified to Pyrrolidone carboxylic acid. N-linked (GlcNAc...) asparagine glycosylation occurs at Asn-29. 2 disulfides stabilise this stretch: Cys-33/Cys-57 and Cys-34/Cys-73.

It belongs to the intercrine beta (chemokine CC) family. As to quaternary structure, monomer. Interacts with TNFAIP6 (via Link domain).

It is found in the secreted. Chemotactic factor that attracts monocytes and eosinophils, but not neutrophils. Augments monocyte anti-tumor activity. The polypeptide is C-C motif chemokine 7 (Ccl7) (Mus musculus (Mouse)).